We begin with the raw amino-acid sequence, 256 residues long: Pimeloyl-[acyl-carrier protein] methyl ester esterase (256 aa).

Positions His15–Pro242 constitute an AB hydrolase-1 domain. Residues Trp22, Ser82–Leu83, and Phe143–Gln147 contribute to the substrate site. Ser82 functions as the Nucleophile in the catalytic mechanism. Catalysis depends on residues Asp207 and His235. His235 is a binding site for substrate.

Belongs to the AB hydrolase superfamily. Carboxylesterase BioH family. Monomer.

It is found in the cytoplasm. It catalyses the reaction 6-carboxyhexanoyl-[ACP] methyl ester + H2O = 6-carboxyhexanoyl-[ACP] + methanol + H(+). The protein operates within cofactor biosynthesis; biotin biosynthesis. The physiological role of BioH is to remove the methyl group introduced by BioC when the pimeloyl moiety is complete. It allows to synthesize pimeloyl-ACP via the fatty acid synthetic pathway through the hydrolysis of the ester bonds of pimeloyl-ACP esters. This is Pimeloyl-[acyl-carrier protein] methyl ester esterase from Shigella boydii serotype 18 (strain CDC 3083-94 / BS512).